Here is a 638-residue protein sequence, read N- to C-terminus: NADH-ubiquinone oxidoreductase chain 5 (638 aa).

15 helical membrane-spanning segments follow: residues 7-27, 66-86, 112-132, 169-189, 203-223, 242-262, 275-295, 307-327, 335-354, 365-385, 404-424, 445-465, 487-507, 520-540, and 618-638; these read TIVSTLSMSIMAILAVSIFFF, FAISVLKTLAFLSVISLLISV, FLLDQYFLLFLSVGLIVTWSI, LFLVFLGWEGVGFLSFLLISW, AVIYNRIGDIGLITFMSLAVL, FVLFMLFGLILAAAGKSAQFG, TPVSALLHSSTMVVAGVFLLV, ANTIVLVLGGTTALFAASTAI, IIAYSTTSQLGLMVAAIGIG, THAFFKAMLFLCLGSVIHSLN, SACLAMGSLALMGTPFLAGFY, LGIVATMLTTVYSFRIVFFCF, ALLRLSIGTILSGWFFSNFIF, GLPLLVTVVGLTVIFISLSYL, and YIASSIAAITIIATLTFIVLS.

This sequence belongs to the complex I subunit 5 family.

The protein resides in the mitochondrion inner membrane. The enzyme catalyses a ubiquinone + NADH + 5 H(+)(in) = a ubiquinol + NAD(+) + 4 H(+)(out). Functionally, core subunit of the mitochondrial membrane respiratory chain NADH dehydrogenase (Complex I) that is believed to belong to the minimal assembly required for catalysis. Complex I functions in the transfer of electrons from NADH to the respiratory chain. The immediate electron acceptor for the enzyme is believed to be ubiquinone. The polypeptide is NADH-ubiquinone oxidoreductase chain 5 (ND5) (Paracentrotus lividus (Common sea urchin)).